Consider the following 348-residue polypeptide: Protein pelota homolog (348 aa).

Belongs to the eukaryotic release factor 1 family. Pelota subfamily. Monomer. Requires a divalent metal cation as cofactor.

It is found in the cytoplasm. Its function is as follows. May function in recognizing stalled ribosomes, interact with stem-loop structures in stalled mRNA molecules, and effect endonucleolytic cleavage of the mRNA. May play a role in the release non-functional ribosomes and degradation of damaged mRNAs. Has endoribonuclease activity. The sequence is that of Protein pelota homolog from Methanococcus maripaludis (strain C5 / ATCC BAA-1333).